Reading from the N-terminus, the 389-residue chain is 26S proteasome regulatory subunit 10B (389 aa).

Residue K72 is modified to N6-acetyllysine. 174 to 181 provides a ligand contact to ATP; sequence GPPGTGKT. K206 is subject to N6-acetyllysine. Residue S244 is modified to Phosphoserine.

Belongs to the AAA ATPase family. As to quaternary structure, component of the 19S proteasome regulatory particle complex. The 26S proteasome consists of a 20S core particle (CP) and two 19S regulatory subunits (RP). The regulatory particle is made of a lid composed of 9 subunits, a base containing 6 ATPases including PSMC6 and few additional components. Interacts with PAAF1.

It localises to the cytoplasm. The protein resides in the nucleus. Component of the 26S proteasome, a multiprotein complex involved in the ATP-dependent degradation of ubiquitinated proteins. This complex plays a key role in the maintenance of protein homeostasis by removing misfolded or damaged proteins, which could impair cellular functions, and by removing proteins whose functions are no longer required. Therefore, the proteasome participates in numerous cellular processes, including cell cycle progression, apoptosis, or DNA damage repair. PSMC6 belongs to the heterohexameric ring of AAA (ATPases associated with diverse cellular activities) proteins that unfolds ubiquitinated target proteins that are concurrently translocated into a proteolytic chamber and degraded into peptides. The protein is 26S proteasome regulatory subunit 10B (PSMC6) of Bos taurus (Bovine).